The chain runs to 393 residues: Tryptophan 2,3-dioxygenase (393 aa).

Substrate contacts are provided by residues 56-60 (FIVTH) and Arg-127. His-312 lines the heme pocket. Thr-327 is a binding site for substrate.

The protein belongs to the tryptophan 2,3-dioxygenase family. As to quaternary structure, homotetramer. Dimer of dimers. It depends on heme as a cofactor.

The enzyme catalyses L-tryptophan + O2 = N-formyl-L-kynurenine. It participates in amino-acid degradation; L-tryptophan degradation via kynurenine pathway; L-kynurenine from L-tryptophan: step 1/2. Its pathway is pigment biosynthesis; ommochrome biosynthesis. With respect to regulation, stimulated by low concentrations of hydrogen peroxide (5 uM), ascorbate (0.1-0.3 mM), and sodium hydrosulfite (0.1 mM). Inhibited by high concentrations of hydrogen peroxide (0.1 mM), ascorbate (10 mM), and sodium hydrosulfite (1 mM). In terms of biological role, heme-dependent dioxygenase that catalyzes the oxidative cleavage of the L-tryptophan (L-Trp) pyrrole ring and converts L-tryptophan to N-formyl-L-kynurenine. Catalyzes the oxidative cleavage of the indole moiety. In Aedes aegypti (Yellowfever mosquito), this protein is Tryptophan 2,3-dioxygenase.